The sequence spans 1407 residues: DNA-directed RNA polymerase subunit beta' (1407 aa).

Residues Cys-70, Cys-72, Cys-85, and Cys-88 each contribute to the Zn(2+) site. The Mg(2+) site is built by Asp-460, Asp-462, and Asp-464. Zn(2+)-binding residues include Cys-814, Cys-889, Cys-896, and Cys-899. A disordered region spans residues 1384–1407 (LVGRSTSSGTEVTSPSKDAIPLGG). The span at 1386-1399 (GRSTSSGTEVTSPS) shows a compositional bias: polar residues.

Belongs to the RNA polymerase beta' chain family. The RNAP catalytic core consists of 2 alpha, 1 beta, 1 beta' and 1 omega subunit. When a sigma factor is associated with the core the holoenzyme is formed, which can initiate transcription. It depends on Mg(2+) as a cofactor. Requires Zn(2+) as cofactor.

It catalyses the reaction RNA(n) + a ribonucleoside 5'-triphosphate = RNA(n+1) + diphosphate. In terms of biological role, DNA-dependent RNA polymerase catalyzes the transcription of DNA into RNA using the four ribonucleoside triphosphates as substrates. This Xylella fastidiosa (strain Temecula1 / ATCC 700964) protein is DNA-directed RNA polymerase subunit beta'.